We begin with the raw amino-acid sequence, 312 residues long: Olfactory receptor 2H2 (312 aa).

The Extracellular portion of the chain corresponds to 1–23 (MVNQSSTPGFLLLGFSEHPGLER). An N-linked (GlcNAc...) asparagine glycan is attached at asparagine 3. A helical transmembrane segment spans residues 24–47 (TLFVVVLTSYLLTLVGNTLIILLS). The Cytoplasmic portion of the chain corresponds to 48–55 (ALDPKLHS). A helical transmembrane segment spans residues 56 to 77 (PMYFFLSNLSFLDLCFTTSCVP). At 78-98 (QMLVNLWGPKKTISFLDCSVQ) the chain is on the extracellular side. A disulfide bond links cysteine 95 and cysteine 187. The chain crosses the membrane as a helical span at residues 99 to 118 (IFIFLSLGTTECILLTVMAF). Residues 119–137 (DRYVAVCQPLHYATIIHPR) lie on the Cytoplasmic side of the membrane. Residues 138 to 156 (LCWQLASVAWVIGLVESVV) form a helical membrane-spanning segment. The Extracellular segment spans residues 157–193 (QTPSTLHLPFCPDRQVDDFVCEVPALIRLSCEDTSYN). The chain crosses the membrane as a helical span at residues 194 to 217 (EIQVAVASVFILVVPLSLILVSYG). Over 218–234 (AITWAVLRINSAKGRRK) the chain is Cytoplasmic. A helical transmembrane segment spans residues 235–257 (AFGTCSSHLTVVTLFYSSVIAVY). Residues 258–270 (LQPKNPYAQERGK) are Extracellular-facing. A helical membrane pass occupies residues 271–290 (FFGLFYAVGTPSLNPLIYTL). The Cytoplasmic segment spans residues 291–312 (RNKEVTRAFRRLLGKEMGLTQS).

It belongs to the G-protein coupled receptor 1 family.

The protein resides in the cell membrane. Functionally, odorant receptor. The chain is Olfactory receptor 2H2 (OR2H2) from Homo sapiens (Human).